A 363-amino-acid chain; its full sequence is Glutamate--cysteine ligase (363 aa).

The protein belongs to the glutamate--cysteine ligase type 2 family. YbdK subfamily.

It carries out the reaction L-cysteine + L-glutamate + ATP = gamma-L-glutamyl-L-cysteine + ADP + phosphate + H(+). Its function is as follows. Catalyzes the synthesis of gamma-glutamylcysteine (gamma-GC), the main low-molecular-weight thiol compound instead of glutathione in halophilic archaea. The sequence is that of Glutamate--cysteine ligase from Haloquadratum walsbyi (strain DSM 16790 / HBSQ001).